Reading from the N-terminus, the 271-residue chain is Phosphonoacetaldehyde hydrolase (271 aa).

Catalysis depends on Asp-12, which acts as the Nucleophile. 2 residues coordinate Mg(2+): Asp-12 and Ala-14. Catalysis depends on Lys-54, which acts as the Schiff-base intermediate with substrate. Asp-188 is a binding site for Mg(2+).

It belongs to the HAD-like hydrolase superfamily. PhnX family. As to quaternary structure, homodimer. It depends on Mg(2+) as a cofactor.

The enzyme catalyses phosphonoacetaldehyde + H2O = acetaldehyde + phosphate + H(+). In terms of biological role, involved in phosphonate degradation. The chain is Phosphonoacetaldehyde hydrolase from Vibrio cholerae serotype O1 (strain ATCC 39541 / Classical Ogawa 395 / O395).